The following is a 338-amino-acid chain: Ornithine carbamoyltransferase, catabolic (338 aa).

Carbamoyl phosphate-binding positions include 58 to 61 (STRT), glutamine 85, arginine 109, and 136 to 139 (HPTQ). L-ornithine-binding positions include asparagine 168, aspartate 232, and 236–237 (SM). Residues 273-274 (CL) and arginine 318 contribute to the carbamoyl phosphate site.

This sequence belongs to the aspartate/ornithine carbamoyltransferase superfamily. OTCase family.

It localises to the cytoplasm. The enzyme catalyses carbamoyl phosphate + L-ornithine = L-citrulline + phosphate + H(+). Its pathway is amino-acid degradation; L-arginine degradation via ADI pathway; carbamoyl phosphate from L-arginine: step 2/2. Reversibly catalyzes the transfer of the carbamoyl group from carbamoyl phosphate (CP) to the N(epsilon) atom of ornithine (ORN) to produce L-citrulline. The chain is Ornithine carbamoyltransferase, catabolic from Streptococcus gordonii (strain Challis / ATCC 35105 / BCRC 15272 / CH1 / DL1 / V288).